A 1312-amino-acid polypeptide reads, in one-letter code: DNA repair protein RAD50 (1312 aa).

ATP contacts are provided by arginine 13, asparagine 38, glycine 39, glycine 41, lysine 42, threonine 43, threonine 44, valine 67, aspartate 69, and glutamine 159. Threonine 43 serves as a coordination point for Mg(2+). A Mg(2+)-binding site is contributed by glutamine 159. 3 coiled-coil regions span residues 228 to 359 (TSKE…QADR), 401 to 598 (RERQ…AKLN), and 635 to 673 (SQDF…ITQL). Serine 635 carries the post-translational modification Phosphoserine; by ATM. A Zinc-hook domain is found at 635-734 (SQDFESDLDR…RRDEMLGLVP (100 aa)). Positions 681 and 684 each coordinate Zn(2+). Threonine 690 is subject to Phosphothreonine. Coiled-coil stretches lie at residues 706–734 (RLAP…GLVP) and 789–1079 (LTDV…GRQK). An N6-acetyllysine modification is found at lysine 959.

It belongs to the SMC family. RAD50 subfamily. Component of the MRN complex composed of two heterodimers RAD50 and MRE11 associated with a single NBN. The MRN complexes dimerize on DNA to form joined MRN-MRN oligomers required for DNA double-strand break repair. As part of the MRN complex, interacts with MCM8 and MCM9; the interaction recruits the complex to DNA repair sites. Component of the BASC complex, at least composed of BRCA1, MSH2, MSH6, MLH1, ATM, BLM, RAD50, MRE11 and NBN. Found in a complex with TERF2. Interacts with RINT1. Interacts with BRCA1 via its N-terminal domain. Interacts with DCLRE1C/Artemis. Interacts with MRNIP. Interacts with CYREN (via XLF motif). Interacts with C1QBP and MRE11; interaction takes place in absence of DNA damage to form the MRC (MRE11-RAD50-C1QBP) complex that inhibits the activity of MRE11. In terms of assembly, (Microbial infection) Interacts with herpes simplex virus 1 protein UL12. Zn(2+) is required as a cofactor. In terms of processing, phosphorylation at Ser-635 by ATM in response to DNA damage is required for double-strand break (DSB) repair. Expressed at very low level in most tissues, except in testis where it is expressed at higher level. Expressed in fibroblasts.

Its subcellular location is the nucleus. The protein localises to the chromosome. It localises to the telomere. It catalyses the reaction ATP + H2O = ADP + phosphate + H(+). In terms of biological role, component of the MRN complex, which plays a central role in double-strand break (DSB) repair, DNA recombination, maintenance of telomere integrity and meiosis. The MRN complex is involved in the repair of DNA double-strand breaks (DSBs) via homologous recombination (HR), an error-free mechanism which primarily occurs during S and G2 phases. The complex (1) mediates the end resection of damaged DNA, which generates proper single-stranded DNA, a key initial steps in HR, and is (2) required for the recruitment of other repair factors and efficient activation of ATM and ATR upon DNA damage. The MRN complex possesses single-strand endonuclease activity and double-strand-specific 3'-5' exonuclease activity, which are provided by MRE11, to initiate end resection, which is required for single-strand invasion and recombination. Within the complex, RAD50 is both required to bind DNA ends and hold them in close proximity and regulate the activity of MRE11. RAD50 provides an ATP-dependent control of MRE11 by positioning DNA ends into the MRE11 active site: ATP-binding induces a large structural change from an open form with accessible MRE11 nuclease sites into a closed form. The MRN complex is also required for DNA damage signaling via activation of the ATM and ATR kinases: the nuclease activity of MRE11 is not required to activate ATM and ATR. The MRN complex is also required for the processing of R-loops. In telomeres the MRN complex may modulate t-loop formation. The sequence is that of DNA repair protein RAD50 from Homo sapiens (Human).